An 894-amino-acid polypeptide reads, in one-letter code: E3 ubiquitin-protein ligase SH3RF1 (894 aa).

An RING-type zinc finger spans residues 12 to 53 (CPVCLERLDASAKVLPCQHTFCKRCLLGIVGSRNELRCPECR). SH3 domains lie at 134–193 (PQLP…IIKP) and 196–259 (QPPP…FNSA). Residues 274 to 323 (VDTAECPSATAAQSSSASKHSDTKKNTRKRHSFTSLTMANKSSQASQNRH) are disordered. Low complexity predominate over residues 281–291 (SATAAQSSSAS). An interaction with RAC1 region spans residues 293–363 (HSDTKKNTRK…APSQVHISTT (71 aa)). The residue at position 305 (serine 305) is a Phosphoserine. A compositionally biased stretch (polar residues) spans 306 to 322 (FTSLTMANKSSQASQNR). The tract at residues 448–551 (HLRPQTRPSV…STAGGPAQKP (104 aa)) is interaction with AKT2. The region spanning 453–514 (TRPSVYVAIY…PGNYVAPVTR (62 aa)) is the SH3 3 domain. Disordered regions lie at residues 526-556 (MSTA…GNGV) and 682-751 (LETE…PTLD). Serine 540 is subject to Phosphoserine. Residues 700–713 (SPESAASACGNSSA) show a composition bias toward polar residues. Positions 715–726 (KPDKDSKKEKKG) are enriched in basic and acidic residues. A Phosphoserine modification is found at serine 743. Residues 835 to 894 (VVCERHRVVVSYPPQSEAELELKEGDIVFVHKKREDGWFKGTLQRNGKTGLFPGSFVENI) form the SH3 4 domain.

It belongs to the SH3RF family. Interacts with HERP1. Interacts with RAC1; in a GTP-dependent manner. Interacts with MAP3K10/MLK2 and MAP3K11/MLK3. Interacts with MAPK8IP; this interaction leads to the PJAC complex (POSH-JIP or SH3RF1/MAPK8IP apoptotic complex) with a 1:1 ratio. Interacts with SIAH1. Probably part of a signaling complex that may contain SH3RF1, MAPK8IP, DLK1, MAP2K4/MKK4, MAP2K7/MKK7, MAPK8/JNK1, MAPK9/JNK2, AKT1 and AKT2. Found in a complex with RAC2, MAP3K7/TAK1, MAP2K7/MKK7, MAPK8IP1/JIP1, MAPK8/JNK1 and MAPK9/JNK2. Found in a complex with RAC1, MAP3K11/MLK3, MAP2K7/MKK7, MAPK8IP1/JIP1 and MAPK8/JNK1. Interacts with SH3RF2. Phosphorylated at Ser-305 by AKT1 and AKT2. When phosphorylated, it has reduced ability to bind Rac. Post-translationally, autoubiquitinated. Ubiquitinated by SH3RF2, leading to proteasome-mediated degradation.

It is found in the cytoplasm. It localises to the perinuclear region. The protein localises to the cell projection. Its subcellular location is the lamellipodium. The protein resides in the golgi apparatus. It is found in the trans-Golgi network. It catalyses the reaction S-ubiquitinyl-[E2 ubiquitin-conjugating enzyme]-L-cysteine + [acceptor protein]-L-lysine = [E2 ubiquitin-conjugating enzyme]-L-cysteine + N(6)-ubiquitinyl-[acceptor protein]-L-lysine.. It functions in the pathway protein modification; protein ubiquitination. Has E3 ubiquitin-protein ligase activity. In the absence of an external substrate, it can catalyze self-ubiquitination. Stimulates ubiquitination of potassium channel KCNJ1, enhancing it's dynamin-dependent and clathrin-independent endocytosis. Acts as a scaffold protein that coordinates with MAPK8IP1/JIP1 in organizing different components of the JNK pathway, including RAC1 or RAC2, MAP3K11/MLK3 or MAP3K7/TAK1, MAP2K7/MKK7, MAPK8/JNK1 and/or MAPK9/JNK2 into a functional multiprotein complex to ensure the effective activation of the JNK signaling pathway. Regulates the differentiation of CD4(+) and CD8(+) T-cells and promotes T-helper 1 (Th1) cell differentiation. Regulates the activation of MAPK8/JNK1 and MAPK9/JNK2 in CD4(+) T-cells and the activation of MAPK8/JNK1 in CD8(+) T-cells. Plays a crucial role in the migration of neocortical neurons in the developing brain. Controls proper cortical neuronal migration and the formation of proximal cytoplasmic dilation in the leading process (PCDLP) in migratory neocortical neurons by regulating the proper localization of activated RAC1 and F-actin assembly. The polypeptide is E3 ubiquitin-protein ligase SH3RF1 (Sh3rf1) (Rattus norvegicus (Rat)).